The primary structure comprises 330 residues: uncharacterized protein (330 aa).

The helical transmembrane segment at 2 to 22 (IKPIYLIIIGTVICLVILYYF) threads the bilayer. N-linked (GlcNAc...) asparagine; by host glycans are attached at residues Asn72, Asn94, Asn234, and Asn315.

Its subcellular location is the membrane. This is an uncharacterized protein from Acanthamoeba polyphaga mimivirus (APMV).